Consider the following 265-residue polypeptide: 4-hydroxy-tetrahydrodipicolinate reductase (265 aa).

NAD(+) is bound by residues 7 to 12, aspartate 33, 96 to 98, and 120 to 123; these read GASGRM, GTT, and AANF. Histidine 153 functions as the Proton donor/acceptor in the catalytic mechanism. A (S)-2,3,4,5-tetrahydrodipicolinate-binding site is contributed by histidine 154. The Proton donor role is filled by lysine 157. A (S)-2,3,4,5-tetrahydrodipicolinate-binding site is contributed by 163 to 164; sequence GT.

The protein belongs to the DapB family.

Its subcellular location is the cytoplasm. It catalyses the reaction (S)-2,3,4,5-tetrahydrodipicolinate + NAD(+) + H2O = (2S,4S)-4-hydroxy-2,3,4,5-tetrahydrodipicolinate + NADH + H(+). It carries out the reaction (S)-2,3,4,5-tetrahydrodipicolinate + NADP(+) + H2O = (2S,4S)-4-hydroxy-2,3,4,5-tetrahydrodipicolinate + NADPH + H(+). The protein operates within amino-acid biosynthesis; L-lysine biosynthesis via DAP pathway; (S)-tetrahydrodipicolinate from L-aspartate: step 4/4. Catalyzes the conversion of 4-hydroxy-tetrahydrodipicolinate (HTPA) to tetrahydrodipicolinate. In Cupriavidus necator (strain ATCC 17699 / DSM 428 / KCTC 22496 / NCIMB 10442 / H16 / Stanier 337) (Ralstonia eutropha), this protein is 4-hydroxy-tetrahydrodipicolinate reductase.